Here is a 363-residue protein sequence, read N- to C-terminus: MTKSYHIAVLPGDGIGPEVMAQAHKVLDAVRQRFGIRITTSEYDVGGIAIDRQGTPLPQATVAGCEQADAILFGSVGGPKWEHLPPAEQPERGALLPLRKHFKLFSNLRPARLYQGLEAFCPLRSDIAAKGFDILCVRELTGGIYFGQPKGREGSGQYERAFDTEVYHRFEIERIAHIAFESARKRRSIVTSIDKANVLQSSILWREIVTEVAKAYPDVKLSHLYIDNATMQLIKDPSQFDVMLCSNLFGDILSDECAMITGSMGMLPSASLNEQGFGLYEPAGGSAPDIAGKDIANPIAQILSLALLLRYSLGADDAAEAIEKAVNTALAEGYRTADLASASNAIGTSEMGDVIARFVAQGA.

Residue 78-91 (GPKWEHLPPAEQPE) participates in NAD(+) binding. R99, R109, R138, and D227 together coordinate substrate. 3 residues coordinate Mg(2+): D227, D251, and D255. 285-297 (GSAPDIAGKDIAN) contributes to the NAD(+) binding site.

It belongs to the isocitrate and isopropylmalate dehydrogenases family. LeuB type 1 subfamily. As to quaternary structure, homodimer. The cofactor is Mg(2+). Mn(2+) is required as a cofactor.

The protein resides in the cytoplasm. It carries out the reaction (2R,3S)-3-isopropylmalate + NAD(+) = 4-methyl-2-oxopentanoate + CO2 + NADH. It functions in the pathway amino-acid biosynthesis; L-leucine biosynthesis; L-leucine from 3-methyl-2-oxobutanoate: step 3/4. In terms of biological role, catalyzes the oxidation of 3-carboxy-2-hydroxy-4-methylpentanoate (3-isopropylmalate) to 3-carboxy-4-methyl-2-oxopentanoate. The product decarboxylates to 4-methyl-2 oxopentanoate. This is 3-isopropylmalate dehydrogenase from Pectobacterium atrosepticum (strain SCRI 1043 / ATCC BAA-672) (Erwinia carotovora subsp. atroseptica).